The sequence spans 397 residues: Protein PEP-RELATED DEVELOPMENT ARRESTED 1, chloroplastic (397 aa).

A chloroplast-targeting transit peptide spans Met-1–Cys-52. Basic and acidic residues predominate over residues Lys-315–Lys-334. Residues Lys-315 to Pro-351 are disordered.

Interacts with FSD2 and MRL7. In terms of tissue distribution, highly expressed in young leaves, shoots and flowers. Expressed at low levels in stems and siliques.

Its subcellular location is the plastid. The protein resides in the chloroplast stroma. It is found in the chloroplast nucleoid. In terms of biological role, plays an essential role in early steps of chloroplast development. May be involved in the redox control of plastid gene expression by maintening the redox state around chloroplast nucleoids. May positively regulate plastid-encoded RNA polymerase (PEP) activity, through binding to FSD2. In Arabidopsis thaliana (Mouse-ear cress), this protein is Protein PEP-RELATED DEVELOPMENT ARRESTED 1, chloroplastic (PRDA1).